We begin with the raw amino-acid sequence, 252 residues long: Imidazole glycerol phosphate synthase subunit HisF (252 aa).

Active-site residues include D11 and D130.

The protein belongs to the HisA/HisF family. Heterodimer of HisH and HisF.

The protein resides in the cytoplasm. It carries out the reaction 5-[(5-phospho-1-deoxy-D-ribulos-1-ylimino)methylamino]-1-(5-phospho-beta-D-ribosyl)imidazole-4-carboxamide + L-glutamine = D-erythro-1-(imidazol-4-yl)glycerol 3-phosphate + 5-amino-1-(5-phospho-beta-D-ribosyl)imidazole-4-carboxamide + L-glutamate + H(+). It participates in amino-acid biosynthesis; L-histidine biosynthesis; L-histidine from 5-phospho-alpha-D-ribose 1-diphosphate: step 5/9. Its function is as follows. IGPS catalyzes the conversion of PRFAR and glutamine to IGP, AICAR and glutamate. The HisF subunit catalyzes the cyclization activity that produces IGP and AICAR from PRFAR using the ammonia provided by the HisH subunit. The chain is Imidazole glycerol phosphate synthase subunit HisF from Sulfurihydrogenibium sp. (strain YO3AOP1).